We begin with the raw amino-acid sequence, 247 residues long: 2,3-bisphosphoglycerate-dependent phosphoglycerate mutase (247 aa).

Substrate-binding positions include 8–15 (RHGESQWN), 21–22 (TG), Arg-60, 87–90 (ERHY), Lys-98, 114–115 (RR), and 183–184 (GN). The Tele-phosphohistidine intermediate role is filled by His-9. Glu-87 (proton donor/acceptor) is an active-site residue.

Belongs to the phosphoglycerate mutase family. BPG-dependent PGAM subfamily.

The catalysed reaction is (2R)-2-phosphoglycerate = (2R)-3-phosphoglycerate. It functions in the pathway carbohydrate degradation; glycolysis; pyruvate from D-glyceraldehyde 3-phosphate: step 3/5. Functionally, catalyzes the interconversion of 2-phosphoglycerate and 3-phosphoglycerate. The chain is 2,3-bisphosphoglycerate-dependent phosphoglycerate mutase from Chlorobaculum parvum (strain DSM 263 / NCIMB 8327) (Chlorobium vibrioforme subsp. thiosulfatophilum).